We begin with the raw amino-acid sequence, 200 residues long: Small ribosomal subunit protein uS4 (200 aa).

Residues 92–155 (SRLDAVVYSL…QKLNVIVESV (64 aa)) form the S4 RNA-binding domain.

The protein belongs to the universal ribosomal protein uS4 family. Part of the 30S ribosomal subunit. Contacts protein S5. The interaction surface between S4 and S5 is involved in control of translational fidelity.

One of the primary rRNA binding proteins, it binds directly to 16S rRNA where it nucleates assembly of the body of the 30S subunit. Functionally, with S5 and S12 plays an important role in translational accuracy. This chain is Small ribosomal subunit protein uS4, found in Staphylococcus aureus (strain MRSA252).